The following is a 96-amino-acid chain: Putative pterin-4-alpha-carbinolamine dehydratase (96 aa).

This sequence belongs to the pterin-4-alpha-carbinolamine dehydratase family.

The enzyme catalyses (4aS,6R)-4a-hydroxy-L-erythro-5,6,7,8-tetrahydrobiopterin = (6R)-L-erythro-6,7-dihydrobiopterin + H2O. The chain is Putative pterin-4-alpha-carbinolamine dehydratase from Paraburkholderia xenovorans (strain LB400).